Reading from the N-terminus, the 254-residue chain is Myeloblastin (254 aa).

The N-terminal stretch at 1-27 is a signal peptide; it reads MSGSYPSPKGIHPFLLLALVVGGAVQA. Residues 28-29 constitute a propeptide that is removed on maturation; it reads SK. The region spanning 30-250 is the Peptidase S1 domain; that stretch reads IVGGHEARPH…YVDWIQNVLR (221 aa). The cysteines at positions 58 and 74 are disulfide-linked. Catalysis depends on charge relay system residues His-73 and Asp-120. Asn-127 and Asn-176 each carry an N-linked (GlcNAc...) asparagine glycan. 3 cysteine pairs are disulfide-bonded: Cys-154–Cys-211, Cys-184–Cys-190, and Cys-201–Cys-226. Residue Ser-205 is the Charge relay system of the active site. Positions 251 to 254 are excised as a propeptide; the sequence is GAEP.

This sequence belongs to the peptidase S1 family. Elastase subfamily. As to quaternary structure, may form dimers. Interacts with CD177; the interaction tethers PRTN3 to the cell surface; the interaction is direct. Interacts with SERPINB1. Interacts with ADGRG3.

It localises to the lysosome. The protein resides in the secreted. The protein localises to the cell membrane. Its subcellular location is the membrane raft. The enzyme catalyses Hydrolysis of proteins, including elastin, by preferential cleavage: -Ala-|-Xaa- &gt; -Val-|-Xaa-.. Its function is as follows. Serine protease that degrades elastin, fibronectin, laminin, vitronectin, and collagen types I, III, and IV (in vitro). By cleaving and activating receptor F2RL1/PAR-2, enhances endothelial cell barrier function and thus vascular integrity during neutrophil transendothelial migration. May play a role in neutrophil transendothelial migration, probably when associated with CD177. Triggers inflammatory processes in neutrophils by interacting with ADGRG3 upstream of F2RL1/PAR2 activation. In Mus musculus (Mouse), this protein is Myeloblastin (Prtn3).